A 437-amino-acid chain; its full sequence is GTPase Era, mitochondrial (437 aa).

The N-terminal 20 residues, 1 to 20, are a transit peptide targeting the mitochondrion; that stretch reads MAAPRRYCAGLVRALLGARQ. The region spanning 112–330 is the Era-type G domain; it reads RVLRVVLLGA…QYLLTQAQPG (219 aa). The G1 stretch occupies residues 120–127; sequence GAPNAGKS. 120-127 contributes to the GTP binding site; it reads GAPNAGKS. The G2 stretch occupies residues 146-150; that stretch reads HTTRC. Residues 167 to 170 are G3; the sequence is DTPG. 167-171 lines the GTP pocket; that stretch reads DTPGI. Ser-173 carries the post-translational modification Phosphoserine. 236–239 contacts GTP; that stretch reads NKVD. The tract at residues 236-239 is G4; that stretch reads NKVD. The segment at 270 to 292 is disordered; sequence LRSRSSTHCPGPETEGPNAHSVR. A G5 region spans residues 308-310; sequence LSA. Residues 360–437 enclose the KH type-2 domain; sequence LPEEVPYGVQ…LIRLSVKLLK (78 aa).

The protein belongs to the TRAFAC class TrmE-Era-EngA-EngB-Septin-like GTPase superfamily. Era GTPase family.

Its subcellular location is the mitochondrion matrix. The protein resides in the mitochondrion inner membrane. Probable GTPase that plays a role in the mitochondrial ribosomal small subunit assembly. Specifically binds the 12S mitochondrial rRNA (12S mt-rRNA) to a 33 nucleotide section delineating the 3' terminal stem-loop region. May act as a chaperone that protects the 12S mt-rRNA on the 28S mitoribosomal subunit during ribosomal small subunit assembly. The sequence is that of GTPase Era, mitochondrial (Eral1) from Mus musculus (Mouse).